The chain runs to 428 residues: Bacteriochlorophyll synthase 44.5 kDa chain (428 aa).

The next 12 helical transmembrane spans lie at 3 to 23 (LGWL…AVVV), 32 to 52 (LMVV…ALHY), 73 to 93 (FFVI…AVAV), 115 to 135 (GFGV…ATEP), 144 to 164 (ITWL…GHFL), 172 to 192 (LLWI…LAVW), 225 to 245 (AFTF…LILE), 269 to 289 (GVFF…IGSL), 291 to 311 (GWVV…VALG), 317 to 337 (ALVP…VAAI), 358 to 378 (LWGA…AGAA), and 393 to 413 (LVFG…TGVV).

The protein belongs to the PucC family.

It is found in the membrane. Its pathway is porphyrin-containing compound metabolism; bacteriochlorophyll biosynthesis (light-independent). In Rhodobacter capsulatus (strain ATCC BAA-309 / NBRC 16581 / SB1003), this protein is Bacteriochlorophyll synthase 44.5 kDa chain.